The following is a 769-amino-acid chain: Serine/threonine-protein kinase PLK4 (769 aa).

The region spanning 14–267 (YEVQHLLGKG…LEAVLCHPFM (254 aa)) is the Protein kinase domain. Residues 20–28 (LGKGGFATV) and K43 each bind ATP. Residue D138 is the Proton acceptor of the active site. The region spanning 381–498 (EDRISVPPLN…ARFVGLVKSK (118 aa)) is the Cryptic POLO box 1 (CPB1) domain. The region spanning 499–602 (TPKVTYFSTL…GRRPITDVQP (104 aa)) is the Cryptic POLO box 2 (CPB2) domain. In terms of domain architecture, POLO box spans 660 to 739 (PIKRINVPEI…IPNIQLKLKT (80 aa)).

The protein belongs to the protein kinase superfamily. Ser/Thr protein kinase family. CDC5/Polo subfamily. Homodimer. Interacts with Alms1a. Ubiquitinated by the SCF-slmb ubiquitin ligase complex; leading to its degradation by the proteasome during interphase and regulating centriole number and ensuring the block to centriole reduplication. Expressed in testis (at protein level).

The protein resides in the cytoplasm. The protein localises to the cytoskeleton. It is found in the microtubule organizing center. Its subcellular location is the centrosome. It localises to the centriole. The enzyme catalyses L-seryl-[protein] + ATP = O-phospho-L-seryl-[protein] + ADP + H(+). It catalyses the reaction L-threonyl-[protein] + ATP = O-phospho-L-threonyl-[protein] + ADP + H(+). Its function is as follows. Serine/threonine-protein kinase that plays a central role in centriole duplication. Able to trigger procentriole formation on the surface of the mother centriole cylinder, using mother centriole as a platform, leading to the recruitment of centriole biogenesis proteins such as Sas-6. When overexpressed, it is able to induce centrosome amplification through the simultaneous generation of multiple procentrioles adjoining each parental centriole during S phase. Centrosome amplification following overexpression can initiate tumorigenesis, highlighting the importance of centrosome regulation in cancers. This is Serine/threonine-protein kinase PLK4 (SAK) from Drosophila melanogaster (Fruit fly).